A 274-amino-acid chain; its full sequence is Nuclease (274 aa).

The first 24 residues, Met1–Ser24, serve as a signal peptide directing secretion. Catalysis depends on His124, which acts as the Proton acceptor. Asn155, Asp246, Glu249, Asp255, Phe256, Gln265, and Glu269 together coordinate Mn(2+).

The protein belongs to the DNA/RNA non-specific endonuclease family. Monomer. It depends on Mn(2+) as a cofactor. Mg(2+) serves as cofactor. The cofactor is Ca(2+). Co(2+) is required as a cofactor. Post-translationally, the N-terminus is blocked.

Its subcellular location is the periplasm. Functionally, catalyzes the degradation of both RNA and DNA; has the potential to act as an endonuclease. The sequence is that of Nuclease (nucA) from Nostoc sp. (strain PCC 7120 / SAG 25.82 / UTEX 2576).